A 103-amino-acid polypeptide reads, in one-letter code: Carboxysome shell protein CsoS1 (103 aa).

The region spanning 9-94 (ALGMIETRGL…PHREVEPALG (86 aa)) is the BMC domain.

Belongs to the bacterial microcompartments protein family. CsoS1 subfamily. In terms of assembly, homohexamer with a small central pore. Forms a CsoS2-CsoS1-RuBisCO complex.

The protein localises to the carboxysome. One of the shell proteins of the carboxysome, a polyhedral inclusion where RuBisCO (ribulose bisphosphate carboxylase, ccbL-ccbS) is sequestered. Assembles into hexamers which make sheets that form the facets of the polyhedral carboxysome. The protein is Carboxysome shell protein CsoS1 of Prochlorococcus marinus (strain MIT 9313).